We begin with the raw amino-acid sequence, 206 residues long: Ras-related protein Ral-B (206 aa).

21–29 (GSGGVGKSA) contacts GTP. The Effector region motif lies at 43 to 51 (YEPTKADSY). GTP is bound by residues 68 to 72 (DTAGQ), 128 to 131 (NKSD), and 158 to 160 (SAK). The span at 180–189 (KMSENKDKNG) shows a compositional bias: basic and acidic residues. Residues 180 to 206 (KMSENKDKNGKKSSKNKKSFKERCCLL) are disordered. The residue at position 203 (cysteine 203) is a Cysteine methyl ester. Cysteine 203 carries the S-geranylgeranyl cysteine lipid modification. Residues 204–206 (CLL) constitute a propeptide, removed in mature form.

It belongs to the small GTPase superfamily. Ras family. In terms of assembly, interacts with EXOC2/Sec5 and EXOC8/Exo84. Interacts (via effector domain) with RALBP1. Prenylation is essential for membrane localization. Post-translationally, the farnesylated form confers resistance to the proapoptotic and anti-anchorage-dependent growth effects of some geranylgeranyltransferase I inhibitors.

The protein resides in the cell membrane. It localises to the midbody. The enzyme catalyses GTP + H2O = GDP + phosphate + H(+). With respect to regulation, alternates between an inactive form bound to GDP and an active form bound to GTP. Activated by a guanine nucleotide-exchange factor (GEF) and inactivated by a GTPase-activating protein (GAP). Functionally, multifunctional GTPase involved in a variety of cellular processes including gene expression, cell migration, cell proliferation, oncogenic transformation and membrane trafficking. Accomplishes its multiple functions by interacting with distinct downstream effectors. Acts as a GTP sensor for GTP-dependent exocytosis of dense core vesicles. Required both to stabilize the assembly of the exocyst complex and to localize functional exocyst complexes to the leading edge of migrating cells. Required for suppression of apoptosis. In late stages of cytokinesis, upon completion of the bridge formation between dividing cells, mediates exocyst recruitment to the midbody to drive abscission. Involved in ligand-dependent receptor mediated endocytosis of the EGF and insulin receptors. The sequence is that of Ras-related protein Ral-B (RALB) from Pongo abelii (Sumatran orangutan).